Reading from the N-terminus, the 519-residue chain is Chaperone SurA (519 aa).

A signal peptide spans 1–31; it reads MMRSLHSLRRMSGTVLALMLAAGLPLSAAQA. 2 stretches are compositionally biased toward low complexity: residues 31–45 and 197–207; these read AQPA…QKPA and PAAAQATRAPA. 2 disordered regions span residues 31 to 50 and 196 to 221; these read AQPA…PAPS and NPAA…PAQS. The PpiC 1 domain occupies 223-324; that stretch reads PAMLVLAQIL…NGFHILKVVD (102 aa). A disordered region spans residues 328–361; the sequence is GGQPAQAARPAPAPAPQQPSSFQEGPSVAAPQGP. A PpiC 2 domain is found at 364 to 463; that stretch reads VTQTHARHIL…FGWHLIQVLE (100 aa).

The protein localises to the periplasm. It carries out the reaction [protein]-peptidylproline (omega=180) = [protein]-peptidylproline (omega=0). Its function is as follows. Chaperone involved in the correct folding and assembly of outer membrane proteins. Recognizes specific patterns of aromatic residues and the orientation of their side chains, which are found more frequently in integral outer membrane proteins. May act in both early periplasmic and late outer membrane-associated steps of protein maturation. The protein is Chaperone SurA of Bordetella parapertussis (strain 12822 / ATCC BAA-587 / NCTC 13253).